The sequence spans 580 residues: V-type proton ATPase catalytic subunit A (580 aa).

ATP is bound at residue 209–216 (GAFGCGKT).

It belongs to the ATPase alpha/beta chains family. In terms of assembly, V-ATPase is a heteromultimeric enzyme composed of a peripheral catalytic V1 complex (main components: subunits A, B, C, D, E, and F) attached to an integral membrane V0 proton pore complex (main component: the proteolipid protein).

The catalysed reaction is ATP + H2O + 4 H(+)(in) = ADP + phosphate + 5 H(+)(out). In terms of biological role, catalytic subunit of the peripheral V1 complex of vacuolar ATPase. V-ATPase vacuolar ATPase is responsible for acidifying a variety of intracellular compartments in eukaryotic cells. This Hordeum vulgare (Barley) protein is V-type proton ATPase catalytic subunit A.